The chain runs to 356 residues: Cyclin-D1-binding protein 1 (356 aa).

Alanine 2 is modified (N-acetylalanine). Interaction with TCF3 stretches follow at residues 2-181 (ASST…VDFV) and 147-356 (ISCN…AAEL). The segment at 2–187 (ASSTAAVPFL…VDFVKDAHEE (186 aa)) is interaction with RPLP0. The segment at 2–205 (ASSTAAVPFL…DPYSGLLNDS (204 aa)) is required for interaction with CCND1. The tract at residues 198–224 (YSGLLNDSEDNSDSHSDEDGVLGLPSN) is disordered. Positions 236 to 356 (LIIPCLALVR…KALTQRAAEL (121 aa)) are interaction with RPLP0.

The protein belongs to the CCNDBP1 family. In terms of assembly, interacts with CCND1 and GRAP2. May also interact with COPS5, RPLP0, SIRT6, SYF2 and TCF3. In terms of processing, phosphorylated. In terms of tissue distribution, expressed at high levels in brain, intestine, muscle and ovary and at lower levels in heart, kidney, liver, lung, spleen and testis.

It is found in the cytoplasm. Its subcellular location is the nucleus. Its function is as follows. May negatively regulate cell cycle progression. May act at least in part via inhibition of the cyclin-D1/CDK4 complex, thereby preventing phosphorylation of RB1 and blocking E2F-dependent transcription. May be required for hepatocyte proliferation. The protein is Cyclin-D1-binding protein 1 (Ccndbp1) of Mus musculus (Mouse).